We begin with the raw amino-acid sequence, 259 residues long: 5'-nucleotidase SurE (259 aa).

A divalent metal cation contacts are provided by Asp-8, Asp-9, Ser-39, and Asn-98.

The protein belongs to the SurE nucleotidase family. It depends on a divalent metal cation as a cofactor.

The protein localises to the cytoplasm. It catalyses the reaction a ribonucleoside 5'-phosphate + H2O = a ribonucleoside + phosphate. Nucleotidase that shows phosphatase activity on nucleoside 5'-monophosphates. The polypeptide is 5'-nucleotidase SurE (Fervidobacterium nodosum (strain ATCC 35602 / DSM 5306 / Rt17-B1)).